The primary structure comprises 394 residues: NAC domain-containing protein 26 (394 aa).

The region spanning 7–156 is the NAC domain; it reads VPPGFRFHPT…GWVVCRVFKK (150 aa). The DNA-binding element occupies 107–162; that stretch reads IGMRKTLVFYKGRAPNGQKSDWIMHEYRLETSENGTPQEEGWVVCRVFKKKLAATV.

It belongs to the plant vascular related NAC-domain protein family. As to quaternary structure, interacts with NAC083/VNI2. Detected in root vessels of protoxylems, outermost metaxylems, inner metaxylems, shoots and hypocotyls. Expressed in roots, hypocotyls, cotyledons and leaves. Expressed in developing xylems. Specifically expressed in vessels in the secondary xylem of the root-hypocotyl region, and in vessels but not in interfascicular fibers in stems.

It is found in the nucleus. In terms of biological role, transcription activator that binds to the secondary wall NAC binding element (SNBE), 5'-(T/A)NN(C/T)(T/C/G)TNNNNNNNA(A/C)GN(A/C/T)(A/T)-3', in the promoter of target genes. Involved in xylem formation by promoting the expression of secondary wall-associated transcription factors and of genes involved in secondary wall biosynthesis and programmed cell death, genes driven by the secondary wall NAC binding element (SNBE). Triggers thickening of secondary walls. This Arabidopsis thaliana (Mouse-ear cress) protein is NAC domain-containing protein 26.